Reading from the N-terminus, the 172-residue chain is Large ribosomal subunit protein bL17 (172 aa).

Residues 140–160 (LKAEAKAKREEKKPAKKEEKP) are compositionally biased toward basic and acidic residues. The segment at 140–172 (LKAEAKAKREEKKPAKKEEKPKKAKKEKAAASN) is disordered.

It belongs to the bacterial ribosomal protein bL17 family. Part of the 50S ribosomal subunit. Contacts protein L32.

This chain is Large ribosomal subunit protein bL17, found in Leptospira biflexa serovar Patoc (strain Patoc 1 / Ames).